We begin with the raw amino-acid sequence, 685 residues long: Bifunctional lycopene cyclase/phytoene synthase (685 aa).

Residues 15–255 (TLSYRHFHLL…LVSACFTFDR (241 aa)) form a lycopene beta-cyclase region. Transmembrane regions (helical) follow at residues 21–41 (FHLL…RPFL), 48–68 (KLIL…NLIV), 92–114 (YFFF…RWAL), 129–149 (LATP…KAAV), 156–176 (YFGM…WGSV), 187–207 (GLAP…ASDV), and 231–251 (LPIE…SACF). Residues 262 to 685 (QSVAENAPPL…RAVSAVYFGV (424 aa)) form a phytoene synthase region.

This sequence in the N-terminal section; belongs to the lycopene beta-cyclase family. The protein in the C-terminal section; belongs to the phytoene/squalene synthase family.

It localises to the membrane. It catalyses the reaction all-trans-lycopene = gamma-carotene. It carries out the reaction gamma-carotene = all-trans-beta-carotene. The catalysed reaction is 2 (2E,6E,10E)-geranylgeranyl diphosphate = 15-cis-phytoene + 2 diphosphate. It functions in the pathway carotenoid biosynthesis; beta-carotene biosynthesis. It participates in carotenoid biosynthesis; phytoene biosynthesis; all-trans-phytoene from geranylgeranyl diphosphate: step 1/1. Bifunctional enzyme that catalyzes the reactions from geranylgeranyl diphosphate to phytoene (phytoene synthase) and lycopene to beta-carotene via the intermediate gamma-carotene (lycopene cyclase). This is Bifunctional lycopene cyclase/phytoene synthase from Sporisorium reilianum (strain SRZ2) (Maize head smut fungus).